The sequence spans 306 residues: Curved DNA-binding protein (306 aa).

The J domain occupies 5–69 (DYYAIMGVKP…QRRAEYDQMW (65 aa)).

Its subcellular location is the cytoplasm. It is found in the nucleoid. DNA-binding protein that preferentially recognizes a curved DNA sequence. It is probably a functional analog of DnaJ; displays overlapping activities with DnaJ, but functions under different conditions, probably acting as a molecular chaperone in an adaptive response to environmental stresses other than heat shock. Lacks autonomous chaperone activity; binds native substrates and targets them for recognition by DnaK. Its activity is inhibited by the binding of CbpM. The chain is Curved DNA-binding protein from Escherichia coli O7:K1 (strain IAI39 / ExPEC).